We begin with the raw amino-acid sequence, 280 residues long: Shikimate dehydrogenase (NADP(+)) (280 aa).

Shikimate-binding positions include 20-22 (SLS) and Thr-67. Residue Lys-71 is the Proton acceptor of the active site. Glu-83 provides a ligand contact to NADP(+). Shikimate-binding residues include Asn-92 and Asp-107. NADP(+) contacts are provided by residues 131 to 135 (GAGGA), 155 to 160 (NRTLNK), and Leu-224. Position 226 (Tyr-226) interacts with shikimate. NADP(+) is bound at residue Gly-247.

This sequence belongs to the shikimate dehydrogenase family. Homodimer.

It catalyses the reaction shikimate + NADP(+) = 3-dehydroshikimate + NADPH + H(+). The protein operates within metabolic intermediate biosynthesis; chorismate biosynthesis; chorismate from D-erythrose 4-phosphate and phosphoenolpyruvate: step 4/7. Functionally, involved in the biosynthesis of the chorismate, which leads to the biosynthesis of aromatic amino acids. Catalyzes the reversible NADPH linked reduction of 3-dehydroshikimate (DHSA) to yield shikimate (SA). The polypeptide is Shikimate dehydrogenase (NADP(+)) (Caldanaerobacter subterraneus subsp. tengcongensis (strain DSM 15242 / JCM 11007 / NBRC 100824 / MB4) (Thermoanaerobacter tengcongensis)).